Consider the following 130-residue polypeptide: Small ribosomal subunit protein uS9 (130 aa).

The protein belongs to the universal ribosomal protein uS9 family.

This Exiguobacterium sibiricum (strain DSM 17290 / CCUG 55495 / CIP 109462 / JCM 13490 / 255-15) protein is Small ribosomal subunit protein uS9.